A 93-amino-acid chain; its full sequence is DNA-directed RNA polymerase subunit omega (93 aa).

The protein belongs to the RNA polymerase subunit omega family. As to quaternary structure, the RNAP catalytic core consists of 2 alpha, 1 beta, 1 beta' and 1 omega subunit. When a sigma factor is associated with the core the holoenzyme is formed, which can initiate transcription.

The enzyme catalyses RNA(n) + a ribonucleoside 5'-triphosphate = RNA(n+1) + diphosphate. Functionally, promotes RNA polymerase assembly. Latches the N- and C-terminal regions of the beta' subunit thereby facilitating its interaction with the beta and alpha subunits. The polypeptide is DNA-directed RNA polymerase subunit omega (Corynebacterium urealyticum (strain ATCC 43042 / DSM 7109)).